The sequence spans 239 residues: tRNA (guanine-N(7)-)-methyltransferase (239 aa).

S-adenosyl-L-methionine-binding residues include glutamate 69, glutamate 94, aspartate 121, and aspartate 144. Aspartate 144 is an active-site residue. Lysine 148 lines the substrate pocket. The interaction with RNA stretch occupies residues 150–155 (RHNKRR). Residues aspartate 180 and 217–220 (TKFE) each bind substrate.

The protein belongs to the class I-like SAM-binding methyltransferase superfamily. TrmB family. As to quaternary structure, monomer.

The enzyme catalyses guanosine(46) in tRNA + S-adenosyl-L-methionine = N(7)-methylguanosine(46) in tRNA + S-adenosyl-L-homocysteine. The protein operates within tRNA modification; N(7)-methylguanine-tRNA biosynthesis. Catalyzes the formation of N(7)-methylguanine at position 46 (m7G46) in tRNA. The polypeptide is tRNA (guanine-N(7)-)-methyltransferase (Sodalis glossinidius (strain morsitans)).